An 84-amino-acid chain; its full sequence is NADH dehydrogenase [ubiquinone] 1 alpha subcomplex subunit 3 (84 aa).

Position 2 is an N-acetylalanine (Ala-2). A helical transmembrane segment spans residues 19-39; that stretch reads LVVSFVVGGLAVILPPLSPYF. Residues 56–84 form a disordered region; that stretch reads PVRDDGNMPDVPSHPQDPQGPSLEWLKKL.

It belongs to the complex I NDUFA3 subunit family. In terms of assembly, complex I is composed of 45 different subunits.

Its subcellular location is the mitochondrion inner membrane. Accessory subunit of the mitochondrial membrane respiratory chain NADH dehydrogenase (Complex I), that is believed not to be involved in catalysis. Complex I functions in the transfer of electrons from NADH to the respiratory chain. The immediate electron acceptor for the enzyme is believed to be ubiquinone. This chain is NADH dehydrogenase [ubiquinone] 1 alpha subcomplex subunit 3 (NDUFA3), found in Homo sapiens (Human).